Here is a 62-residue protein sequence, read N- to C-terminus: Conotoxin Lt5.5 (62 aa).

An N-terminal signal peptide occupies residues 1–22 (MRCLQVFIIFLLLIPSPPSVDA). Positions 23 to 48 (QRKTKDDVPLASFHDNAKRTLKRLWN) are excised as a propeptide.

It belongs to the conotoxin T superfamily. Contains 2 disulfide bonds that can be either 'C1-C3, C2-C4' or 'C1-C4, C2-C3', since these disulfide connectivities have been observed for conotoxins with cysteine framework V (for examples, see AC P0DQQ7 and AC P81755). As to expression, expressed by the venom duct.

The protein resides in the secreted. The protein is Conotoxin Lt5.5 of Conus litteratus (Lettered cone).